Consider the following 41-residue polypeptide: Alpha-conotoxin-like Pu1.2 (41 aa).

Positions 1–21 are excised as a propeptide; sequence LDGRNAAADFETSDLLAMTIR. 2 cysteine pairs are disulfide-bonded: Cys24–Cys30 and Cys25–Cys37. Cys37 is modified (cysteine amide). The propeptide occupies 38-41; the sequence is GGKR.

It belongs to the conotoxin A superfamily. Non-native isomers 'ribbon' (with disulfide connectivity C1-C4, C2-C3) and 'beads' (with disulfide connectivity C1-C2, C3-C4) also inhibit high voltage-activated (HVA) calcium channel currents in rat DRG neurons (25-30% inhibition at 1 uM toxin). Post-translationally, mutants Pu1.2(9-16), [C3S; C9S]Pu1.2 and [C4S]Pu1.2(1-9) are all C-terminally amidated. Expressed by the venom duct.

Its subcellular location is the secreted. Its function is as follows. Alpha-conotoxins act on postsynaptic membranes, they bind to the nicotinic acetylcholine receptors (nAChR) and thus inhibit them. This toxin also inhibits high voltage-activated (HVA) calcium channel currents in rat DRG neurons (27% inhibition at 1 uM toxin) probably by activating GABA(B) receptors (GABBR1 and/or GABBR2). The chain is Alpha-conotoxin-like Pu1.2 from Conus pulicarius (Flea-bitten cone).